The primary structure comprises 74 residues: Serine protease inhibitor Kazal-type 7 (74 aa).

A signal peptide spans 1–17 (MKLLGGLLLLFTATCLC). Residues 18 to 74 (NVDCDIYKKYPVVAIPCPIENIPVCGSDYITYGNKCKLCTEILRSNGKIQFLHEGHC) enclose the Kazal-like domain. 3 cysteine pairs are disulfide-bonded: C21/C56, C34/C53, and C42/C74.

It localises to the secreted. In terms of biological role, probable serine protease inhibitor. This chain is Serine protease inhibitor Kazal-type 7 (Spink7), found in Rattus norvegicus (Rat).